The primary structure comprises 454 residues: tRNA modification GTPase MnmE (454 aa).

3 residues coordinate (6S)-5-formyl-5,6,7,8-tetrahydrofolate: Arg-23, Glu-80, and Lys-120. Residues 216–377 enclose the TrmE-type G domain; the sequence is GMKVVIAGRP…LRNHLKQSMG (162 aa). A K(+)-binding site is contributed by Asn-226. GTP is bound by residues 226 to 231, 245 to 251, 270 to 273, 335 to 338, and 358 to 360; these read NAGKSS, TDIAGTT, DTAG, NKAD, and SAR. Ser-230 lines the Mg(2+) pocket. K(+) is bound by residues Thr-245, Ile-247, and Thr-250. Thr-251 contributes to the Mg(2+) binding site. Lys-454 is a binding site for (6S)-5-formyl-5,6,7,8-tetrahydrofolate.

Belongs to the TRAFAC class TrmE-Era-EngA-EngB-Septin-like GTPase superfamily. TrmE GTPase family. Homodimer. Heterotetramer of two MnmE and two MnmG subunits. K(+) is required as a cofactor.

Its subcellular location is the cytoplasm. In terms of biological role, exhibits a very high intrinsic GTPase hydrolysis rate. Involved in the addition of a carboxymethylaminomethyl (cmnm) group at the wobble position (U34) of certain tRNAs, forming tRNA-cmnm(5)s(2)U34. In Citrobacter koseri (strain ATCC BAA-895 / CDC 4225-83 / SGSC4696), this protein is tRNA modification GTPase MnmE.